A 373-amino-acid chain; its full sequence is Queuine tRNA-ribosyltransferase (373 aa).

Catalysis depends on Asp93, which acts as the Proton acceptor. Substrate contacts are provided by residues 93-97 (DSGGF), Asp147, Gln190, and Gly219. Residues 250–256 (GVGEPVD) form an RNA binding region. Asp269 functions as the Nucleophile in the catalytic mechanism. Positions 274 to 278 (TRLAR) are RNA binding; important for wobble base 34 recognition. 4 residues coordinate Zn(2+): Cys307, Cys309, Cys312, and His338.

This sequence belongs to the queuine tRNA-ribosyltransferase family. Homodimer. Within each dimer, one monomer is responsible for RNA recognition and catalysis, while the other monomer binds to the replacement base PreQ1. Zn(2+) serves as cofactor.

It carries out the reaction 7-aminomethyl-7-carbaguanine + guanosine(34) in tRNA = 7-aminomethyl-7-carbaguanosine(34) in tRNA + guanine. It participates in tRNA modification; tRNA-queuosine biosynthesis. Its function is as follows. Catalyzes the base-exchange of a guanine (G) residue with the queuine precursor 7-aminomethyl-7-deazaguanine (PreQ1) at position 34 (anticodon wobble position) in tRNAs with GU(N) anticodons (tRNA-Asp, -Asn, -His and -Tyr). Catalysis occurs through a double-displacement mechanism. The nucleophile active site attacks the C1' of nucleotide 34 to detach the guanine base from the RNA, forming a covalent enzyme-RNA intermediate. The proton acceptor active site deprotonates the incoming PreQ1, allowing a nucleophilic attack on the C1' of the ribose to form the product. After dissociation, two additional enzymatic reactions on the tRNA convert PreQ1 to queuine (Q), resulting in the hypermodified nucleoside queuosine (7-(((4,5-cis-dihydroxy-2-cyclopenten-1-yl)amino)methyl)-7-deazaguanosine). The protein is Queuine tRNA-ribosyltransferase of Fusobacterium nucleatum subsp. nucleatum (strain ATCC 25586 / DSM 15643 / BCRC 10681 / CIP 101130 / JCM 8532 / KCTC 2640 / LMG 13131 / VPI 4355).